We begin with the raw amino-acid sequence, 445 residues long: N-succinylarginine dihydrolase (445 aa).

Substrate contacts are provided by residues 19-28 (AGLSYGNVAS), Asn-110, and 137-138 (HR). Glu-174 is an active-site residue. Arg-214 contributes to the substrate binding site. His-250 is an active-site residue. Substrate contacts are provided by Asp-252 and Asn-363. Cys-369 serves as the catalytic Nucleophile.

It belongs to the succinylarginine dihydrolase family. Homodimer.

It catalyses the reaction N(2)-succinyl-L-arginine + 2 H2O + 2 H(+) = N(2)-succinyl-L-ornithine + 2 NH4(+) + CO2. Its pathway is amino-acid degradation; L-arginine degradation via AST pathway; L-glutamate and succinate from L-arginine: step 2/5. Functionally, catalyzes the hydrolysis of N(2)-succinylarginine into N(2)-succinylornithine, ammonia and CO(2). The protein is N-succinylarginine dihydrolase of Aeromonas hydrophila subsp. hydrophila (strain ATCC 7966 / DSM 30187 / BCRC 13018 / CCUG 14551 / JCM 1027 / KCTC 2358 / NCIMB 9240 / NCTC 8049).